The chain runs to 321 residues: Ribosomal RNA small subunit methyltransferase H (321 aa).

S-adenosyl-L-methionine is bound by residues alanine 33–histidine 35, aspartate 58, phenylalanine 85, aspartate 111, and glutamine 118.

It belongs to the methyltransferase superfamily. RsmH family.

It localises to the cytoplasm. It carries out the reaction cytidine(1402) in 16S rRNA + S-adenosyl-L-methionine = N(4)-methylcytidine(1402) in 16S rRNA + S-adenosyl-L-homocysteine + H(+). Its function is as follows. Specifically methylates the N4 position of cytidine in position 1402 (C1402) of 16S rRNA. This chain is Ribosomal RNA small subunit methyltransferase H, found in Chloroherpeton thalassium (strain ATCC 35110 / GB-78).